Consider the following 222-residue polypeptide: Orotate phosphoribosyltransferase (222 aa).

A 5-phospho-alpha-D-ribose 1-diphosphate-binding site is contributed by Lys-29. 37-38 (FF) provides a ligand contact to orotate. 5-phospho-alpha-D-ribose 1-diphosphate contacts are provided by residues 75-76 (YK), Arg-101, Lys-102, Lys-105, His-107, and 126-134 (DDVISAGTS). Orotate is bound by residues Ser-130 and Arg-158.

It belongs to the purine/pyrimidine phosphoribosyltransferase family. PyrE subfamily. Homodimer. Mg(2+) serves as cofactor.

It catalyses the reaction orotidine 5'-phosphate + diphosphate = orotate + 5-phospho-alpha-D-ribose 1-diphosphate. Its pathway is pyrimidine metabolism; UMP biosynthesis via de novo pathway; UMP from orotate: step 1/2. Functionally, catalyzes the transfer of a ribosyl phosphate group from 5-phosphoribose 1-diphosphate to orotate, leading to the formation of orotidine monophosphate (OMP). This chain is Orotate phosphoribosyltransferase, found in Polynucleobacter necessarius subsp. necessarius (strain STIR1).